The sequence spans 298 residues: Putative olfactory receptor 10D4 (298 aa).

The Extracellular segment spans residues 1 to 23 (MRNHTMVTEFILLGIPETEGLET). Asn3 carries N-linked (GlcNAc...) asparagine glycosylation. A helical membrane pass occupies residues 24 to 44 (ALLFLFSSFYLCTLLGNVLIL). Residues 45–52 (TAIISSTR) lie on the Cytoplasmic side of the membrane. The helical transmembrane segment at 53–73 (LHTPMYFFLGNLSIFDLGFSS) threads the bilayer. Residues 74-97 (TTVPKMLFYLSGNSHAISYAGCVS) are Extracellular-facing. Cys95 and Cys187 are disulfide-bonded. A helical membrane pass occupies residues 98 to 118 (QLFFYHFLGCTECFLYTVMAC). At 119-137 (DRFVAICFPLRYTVIMNHR) the chain is on the cytoplasmic side. The helical transmembrane segment at 138–158 (VCFMLATGTWMIGCVHAMILT) threads the bilayer. At 159–195 (PLTFQLPYCGPNKVGYYFCDIPAVLPLACKDTSLAQR) the chain is on the extracellular side. The helical transmembrane segment at 196–215 (VGFTNVGLLSLICFFLILVS) threads the bilayer. Topologically, residues 216–235 (YTCIGISISKIRSAEGRQRA) are cytoplasmic. Residues 236–256 (FSTCSAHLTAILCAYGPVIVI) form a helical membrane-spanning segment. Over 257–267 (YLQPNPSALLG) the chain is Extracellular. The chain crosses the membrane as a helical span at residues 268-288 (SIIQILNNLVTPMLNPLIYSL). The Cytoplasmic portion of the chain corresponds to 289-298 (RNKDVKSDQP).

It belongs to the G-protein coupled receptor 1 family.

It localises to the cell membrane. Odorant receptor. The chain is Putative olfactory receptor 10D4 (OR10D4P) from Homo sapiens (Human).